Here is a 412-residue protein sequence, read N- to C-terminus: Alpha-1-antiproteinase (412 aa).

A signal peptide spans 1–24; the sequence is MTPSISWGLLLLAGLFCLVPSFLA. At Ser33 the chain carries Phosphoserine. N-linked (GlcNAc...) asparagine glycans are attached at residues Asn100, Asn133, Asn264, and Asn313. The RCL stretch occupies residues 367–386; the sequence is AATVLQAVPMSMPPILNFNK. At Ser377 the chain carries Phosphoserine.

This sequence belongs to the serpin family. Interacts with CELA2A. Interacts with ERGIC3 and LMAN1/ERGIC53. Interacts with PRSS1/Trypsin. In terms of tissue distribution, expressed not only in liver but also in kidney tubule cells, where it is regulated by androgens during development.

Its subcellular location is the secreted. Inhibitor of serine proteases. Its primary target is elastase, but it also has a moderate affinity for plasmin and thrombin. The sequence is that of Alpha-1-antiproteinase (Serpina1) from Mus caroli (Ryukyu mouse).